The chain runs to 369 residues: Mitogen-activated protein kinase 11 (369 aa).

Positions V40–L326 constitute a Protein kinase domain. ATP-binding positions include I46–V54 and K69. The active-site Proton acceptor is D166. T198 carries the post-translational modification Phosphothreonine. The short motif at T198–Y200 is the TXY element. Y200 is modified (phosphotyrosine). A Phosphothreonine modification is found at T203.

This sequence belongs to the protein kinase superfamily. CMGC Ser/Thr protein kinase family. MAP kinase subfamily. As to quaternary structure, interacts with MKK1, MKK2 and MKK6. Post-translationally, dually phosphorylated on Thr-198 and Tyr-200, which activates the enzyme.

The catalysed reaction is L-seryl-[protein] + ATP = O-phospho-L-seryl-[protein] + ADP + H(+). It carries out the reaction L-threonyl-[protein] + ATP = O-phospho-L-threonyl-[protein] + ADP + H(+). Activated by threonine and tyrosine phosphorylation. This chain is Mitogen-activated protein kinase 11 (MPK11), found in Arabidopsis thaliana (Mouse-ear cress).